A 437-amino-acid chain; its full sequence is MLTAFARAFKTPDLRKKLLFTLGIIVVYRLGTHIPIPGVDYKNVQECVDQASGNQGLFGLVNMFSGGALLQITVFALGIMPYITASIILQLLTVVIPRLEALKKEGQAGTAKITQYTRYLTVALAILQGTGLVATARSGALFSGCTVAGQIVPDQAIFTTVVMVICMTAGTCVVMWLGELITDRGIGNGMSILMFISIAATFPSALWAIKKQGELADGWIEFGTVILVGLVMVGLVVFVEQAQRRIPVQYAKRMIGRRSYGGTSTYIPLKVNQAGVIPVIFASSLLYIPALIVQFSNSTAGWATWITKNLADTAATPHIILYFFLIVFFAFFYVAISFNPEEVADNMKKYGGFIPGIRAGRPTAEYLSYVLNRITWPGSLYLGLIALVPTMALAGFGANQNFPFGGTSILIIVGVGLETVKQIESQLQQRNYEGFLR.

Helical transmembrane passes span 19–39 (LFTLGIIVVYRLGTHIPIPGV), 69–89 (LLQITVFALGIMPYITASIIL), 122–142 (VALAILQGTGLVATARSGALF), 157–177 (IFTTVVMVICMTAGTCVVMWL), 189–209 (GMSILMFISIAATFPSALWAI), 219–239 (WIEFGTVILVGLVMVGLVVFV), 275–295 (GVIPVIFASSLLYIPALIVQF), 318–338 (HIILYFFLIVFFAFFYVAISF), 378–398 (GSLYLGLIALVPTMALAGFGA), and 400–420 (QNFPFGGTSILIIVGVGLETV).

It belongs to the SecY/SEC61-alpha family. As to quaternary structure, component of the Sec protein translocase complex. Heterotrimer consisting of SecY, SecE and SecG subunits. The heterotrimers can form oligomers, although 1 heterotrimer is thought to be able to translocate proteins. Interacts with the ribosome. Interacts with SecDF, and other proteins may be involved. Interacts with SecA.

It is found in the cell membrane. In terms of biological role, the central subunit of the protein translocation channel SecYEG. Consists of two halves formed by TMs 1-5 and 6-10. These two domains form a lateral gate at the front which open onto the bilayer between TMs 2 and 7, and are clamped together by SecE at the back. The channel is closed by both a pore ring composed of hydrophobic SecY resides and a short helix (helix 2A) on the extracellular side of the membrane which forms a plug. The plug probably moves laterally to allow the channel to open. The ring and the pore may move independently. The protein is Protein translocase subunit SecY of Streptomyces coelicolor (strain ATCC BAA-471 / A3(2) / M145).